Consider the following 822-residue polypeptide: Penicillin-binding protein 1A (822 aa).

Over Met-1–Lys-5 the chain is Cytoplasmic. The chain crosses the membrane as a helical; Signal-anchor for type II membrane protein span at residues Phe-6–Tyr-26. The Periplasmic portion of the chain corresponds to Leu-27–Phe-822. Positions Leu-48–Thr-216 are transglycosylase. The active-site Proton donor; for transglycosylase activity is Glu-86. The transpeptidase stretch occupies residues Ile-403 to Arg-744. Residue Ser-461 is the Acyl-ester intermediate; for transpeptidase activity of the active site. 2 disordered regions span residues Ala-614 to Thr-654 and Lys-790 to Phe-822. The segment covering Pro-812–Phe-822 has biased composition (acidic residues).

In the N-terminal section; belongs to the glycosyltransferase 51 family. It in the C-terminal section; belongs to the transpeptidase family.

The protein localises to the cell inner membrane. The catalysed reaction is [GlcNAc-(1-&gt;4)-Mur2Ac(oyl-L-Ala-gamma-D-Glu-L-Lys-D-Ala-D-Ala)](n)-di-trans,octa-cis-undecaprenyl diphosphate + beta-D-GlcNAc-(1-&gt;4)-Mur2Ac(oyl-L-Ala-gamma-D-Glu-L-Lys-D-Ala-D-Ala)-di-trans,octa-cis-undecaprenyl diphosphate = [GlcNAc-(1-&gt;4)-Mur2Ac(oyl-L-Ala-gamma-D-Glu-L-Lys-D-Ala-D-Ala)](n+1)-di-trans,octa-cis-undecaprenyl diphosphate + di-trans,octa-cis-undecaprenyl diphosphate + H(+). The enzyme catalyses Preferential cleavage: (Ac)2-L-Lys-D-Ala-|-D-Ala. Also transpeptidation of peptidyl-alanyl moieties that are N-acyl substituents of D-alanine.. It participates in cell wall biogenesis; peptidoglycan biosynthesis. Functionally, cell wall formation. Synthesis of cross-linked peptidoglycan from the lipid intermediates. The enzyme has a penicillin-insensitive transglycosylase N-terminal domain (formation of linear glycan strands) and a penicillin-sensitive transpeptidase C-terminal domain (cross-linking of the peptide subunits). This chain is Penicillin-binding protein 1A (mrcA), found in Pseudomonas aeruginosa (strain ATCC 15692 / DSM 22644 / CIP 104116 / JCM 14847 / LMG 12228 / 1C / PRS 101 / PAO1).